The sequence spans 747 residues: Polyribonucleotide nucleotidyltransferase (747 aa).

The Mg(2+) site is built by Asp493 and Asp499. Residues 560–619 (PRIITLQINPEKIGALIGPGGKTVRGITEATGAQIDIEEDGRVYISTPDAAAAQQAVAMV) enclose the KH domain. Positions 629 to 698 (GDIFLGKVVR…GTGKVSLSRR (70 aa)) constitute an S1 motif domain. The disordered stretch occupies residues 705 to 747 (TAEDRRAAGAGRGLRDGGGRSGGSDRGGDRGPRGDDRQRPRRR). Composition is skewed to basic and acidic residues over residues 706 to 722 (AEDR…RDGG) and 730 to 747 (RGGD…PRRR).

This sequence belongs to the polyribonucleotide nucleotidyltransferase family. Mg(2+) serves as cofactor.

It is found in the cytoplasm. The enzyme catalyses RNA(n+1) + phosphate = RNA(n) + a ribonucleoside 5'-diphosphate. In terms of biological role, involved in mRNA degradation. Catalyzes the phosphorolysis of single-stranded polyribonucleotides processively in the 3'- to 5'-direction. The polypeptide is Polyribonucleotide nucleotidyltransferase (Roseiflexus sp. (strain RS-1)).